The primary structure comprises 371 residues: Poly(rC)-binding protein 3 (371 aa).

KH domains lie at 45–95 (TLTI…TITG), 129–182 (PVTL…TISG), and 293–357 (ASTH…QYLI).

The protein resides in the cytoplasm. Its function is as follows. Single-stranded nucleic acid binding protein that binds preferentially to oligo dC. The protein is Poly(rC)-binding protein 3 of Homo sapiens (Human).